The following is a 261-amino-acid chain: Cytochrome c oxidase subunit 3 (261 aa).

Residues 1–15 (MAHQAHPYHMVDPSP) are Mitochondrial matrix-facing. The chain crosses the membrane as a helical span at residues 16 to 34 (WPLTGATAALLMTSGLAIW). The Mitochondrial intermembrane segment spans residues 35-40 (FHFHSL). The chain crosses the membrane as a helical span at residues 41 to 66 (LLLYLGLTLLLLTMIQWWRDIIREGT). At 67 to 72 (FQGHHT) the chain is on the mitochondrial matrix side. A helical membrane pass occupies residues 73–105 (PPVQKGLRYGMILFIVSEVFFFLGFFWAFYHSS). At 106 to 128 (LAPTPELGGCWPPTGINPLDPFE) the chain is on the mitochondrial intermembrane side. Residues 129 to 152 (VPLLNTAVLLASGVTVTWAHHGLM) form a helical membrane-spanning segment. Topologically, residues 153 to 155 (EGN) are mitochondrial matrix. A helical transmembrane segment spans residues 156 to 183 (RKEAIQALTLTIILGVYFTALQAMEYYE). Residues 184 to 190 (APFTIAD) are Mitochondrial intermembrane-facing. The chain crosses the membrane as a helical span at residues 191–223 (GVYGTTFFVATGFHGLHVIIGSTFLAVCLLRQV). Topologically, residues 224 to 232 (LYHFTSEHH) are mitochondrial matrix. Residues 233 to 256 (FGFEAAAWYWHFVDVVWLFLYVSI) form a helical membrane-spanning segment. Residues 257–261 (YWWGS) lie on the Mitochondrial intermembrane side of the membrane.

The protein belongs to the cytochrome c oxidase subunit 3 family. Component of the cytochrome c oxidase (complex IV, CIV), a multisubunit enzyme composed of 14 subunits. The complex is composed of a catalytic core of 3 subunits MT-CO1, MT-CO2 and MT-CO3, encoded in the mitochondrial DNA, and 11 supernumerary subunits COX4I, COX5A, COX5B, COX6A, COX6B, COX6C, COX7A, COX7B, COX7C, COX8 and NDUFA4, which are encoded in the nuclear genome. The complex exists as a monomer or a dimer and forms supercomplexes (SCs) in the inner mitochondrial membrane with NADH-ubiquinone oxidoreductase (complex I, CI) and ubiquinol-cytochrome c oxidoreductase (cytochrome b-c1 complex, complex III, CIII), resulting in different assemblies (supercomplex SCI(1)III(2)IV(1) and megacomplex MCI(2)III(2)IV(2)).

It is found in the mitochondrion inner membrane. It catalyses the reaction 4 Fe(II)-[cytochrome c] + O2 + 8 H(+)(in) = 4 Fe(III)-[cytochrome c] + 2 H2O + 4 H(+)(out). Functionally, component of the cytochrome c oxidase, the last enzyme in the mitochondrial electron transport chain which drives oxidative phosphorylation. The respiratory chain contains 3 multisubunit complexes succinate dehydrogenase (complex II, CII), ubiquinol-cytochrome c oxidoreductase (cytochrome b-c1 complex, complex III, CIII) and cytochrome c oxidase (complex IV, CIV), that cooperate to transfer electrons derived from NADH and succinate to molecular oxygen, creating an electrochemical gradient over the inner membrane that drives transmembrane transport and the ATP synthase. Cytochrome c oxidase is the component of the respiratory chain that catalyzes the reduction of oxygen to water. Electrons originating from reduced cytochrome c in the intermembrane space (IMS) are transferred via the dinuclear copper A center (CU(A)) of subunit 2 and heme A of subunit 1 to the active site in subunit 1, a binuclear center (BNC) formed by heme A3 and copper B (CU(B)). The BNC reduces molecular oxygen to 2 water molecules using 4 electrons from cytochrome c in the IMS and 4 protons from the mitochondrial matrix. The sequence is that of Cytochrome c oxidase subunit 3 (MT-CO3) from Scyliorhinus canicula (Small-spotted catshark).